Here is a 164-residue protein sequence, read N- to C-terminus: CDP-archaeol synthase (164 aa).

4 helical membrane passes run 3 to 23 (LFVFFALIWPPYVANGSAVLA), 53 to 73 (GLAIGVVLGTVVGYLPNLLHP), 77 to 97 (LLDALILSVAALLGDLLGAFI), and 126 to 146 (SLYADVPVEYIIAASVVTPII).

It belongs to the CDP-archaeol synthase family. Mg(2+) serves as cofactor.

The protein localises to the cell membrane. It carries out the reaction 2,3-bis-O-(geranylgeranyl)-sn-glycerol 1-phosphate + CTP + H(+) = CDP-2,3-bis-O-(geranylgeranyl)-sn-glycerol + diphosphate. Its pathway is membrane lipid metabolism; glycerophospholipid metabolism. Its function is as follows. Catalyzes the formation of CDP-2,3-bis-(O-geranylgeranyl)-sn-glycerol (CDP-archaeol) from 2,3-bis-(O-geranylgeranyl)-sn-glycerol 1-phosphate (DGGGP) and CTP. This reaction is the third ether-bond-formation step in the biosynthesis of archaeal membrane lipids. The polypeptide is CDP-archaeol synthase (Pyrobaculum arsenaticum (strain DSM 13514 / JCM 11321 / PZ6)).